Here is a 176-residue protein sequence, read N- to C-terminus: Tubulin polymerization-promoting protein family member 3 (176 aa).

An N-acetylalanine modification is found at Ala-2.

The protein belongs to the TPPP family.

It is found in the cytoplasm. The protein localises to the cytoskeleton. In terms of biological role, regulator of microtubule dynamic that has microtubule bundling activity. Required for embryo implantation; possibly by regulating beta-catenin. Also required for decidualization via regulation of beta-catenin. This is Tubulin polymerization-promoting protein family member 3 (TPPP3) from Bos taurus (Bovine).